We begin with the raw amino-acid sequence, 477 residues long: Ribulose bisphosphate carboxylase large chain (477 aa).

The propeptide occupies 1–2 (MS). N-acetylproline is present on Pro-3. Lys-14 carries the N6,N6,N6-trimethyllysine modification. Positions 123 and 173 each coordinate substrate. Lys-175 acts as the Proton acceptor in catalysis. A substrate-binding site is contributed by Lys-177. Residues Lys-201, Asp-203, and Glu-204 each contribute to the Mg(2+) site. Lys-201 is modified (N6-carboxylysine). The active-site Proton acceptor is the His-294. Residues Arg-295, His-327, and Ser-379 each contribute to the substrate site.

It belongs to the RuBisCO large chain family. Type I subfamily. In terms of assembly, heterohexadecamer of 8 large chains and 8 small chains; disulfide-linked. The disulfide link is formed within the large subunit homodimers. Mg(2+) serves as cofactor. The disulfide bond which can form in the large chain dimeric partners within the hexadecamer appears to be associated with oxidative stress and protein turnover.

The protein resides in the plastid. Its subcellular location is the chloroplast. It carries out the reaction 2 (2R)-3-phosphoglycerate + 2 H(+) = D-ribulose 1,5-bisphosphate + CO2 + H2O. It catalyses the reaction D-ribulose 1,5-bisphosphate + O2 = 2-phosphoglycolate + (2R)-3-phosphoglycerate + 2 H(+). Functionally, ruBisCO catalyzes two reactions: the carboxylation of D-ribulose 1,5-bisphosphate, the primary event in carbon dioxide fixation, as well as the oxidative fragmentation of the pentose substrate in the photorespiration process. Both reactions occur simultaneously and in competition at the same active site. The sequence is that of Ribulose bisphosphate carboxylase large chain from Carthamus tinctorius (Safflower).